The primary structure comprises 119 residues: NADH-quinone oxidoreductase subunit A (119 aa).

Helical transmembrane passes span 9–29 (VILF…LGFL), 63–83 (LVAI…PWAV), and 88–108 (IGAT…VGFV).

Belongs to the complex I subunit 3 family. As to quaternary structure, NDH-1 is composed of 14 different subunits. Subunits NuoA, H, J, K, L, M, N constitute the membrane sector of the complex.

The protein resides in the cell inner membrane. It catalyses the reaction a quinone + NADH + 5 H(+)(in) = a quinol + NAD(+) + 4 H(+)(out). Functionally, NDH-1 shuttles electrons from NADH, via FMN and iron-sulfur (Fe-S) centers, to quinones in the respiratory chain. The immediate electron acceptor for the enzyme in this species is believed to be ubiquinone. Couples the redox reaction to proton translocation (for every two electrons transferred, four hydrogen ions are translocated across the cytoplasmic membrane), and thus conserves the redox energy in a proton gradient. The sequence is that of NADH-quinone oxidoreductase subunit A from Leptothrix cholodnii (strain ATCC 51168 / LMG 8142 / SP-6) (Leptothrix discophora (strain SP-6)).